A 533-amino-acid chain; its full sequence is D-3-phosphoglycerate dehydrogenase (533 aa).

Residue Ala2 is modified to N-acetylalanine. At Ser14 the chain carries Phosphoserine. At Lys21 the chain carries N6-acetyllysine; alternate. A Glycyl lysine isopeptide (Lys-Gly) (interchain with G-Cter in SUMO1); alternate cross-link involves residue Lys21. Residue Lys21 forms a Glycyl lysine isopeptide (Lys-Gly) (interchain with G-Cter in SUMO2); alternate linkage. N6-acetyllysine is present on Lys58. NAD(+) is bound by residues Thr78, 155–156 (RI), Asp175, Thr207, 234–236 (CAR), and Asp260. The residue at position 78 (Thr78) is a Phosphothreonine. Arg236 is an active-site residue. The active site involves Glu265. His283 (proton donor) is an active-site residue. 283-286 (HLGA) serves as a coordination point for NAD(+).

Belongs to the D-isomer specific 2-hydroxyacid dehydrogenase family. Homotetramer.

The enzyme catalyses (2R)-3-phosphoglycerate + NAD(+) = 3-phosphooxypyruvate + NADH + H(+). The catalysed reaction is (R)-2-hydroxyglutarate + NAD(+) = 2-oxoglutarate + NADH + H(+). It carries out the reaction (S)-malate + NAD(+) = oxaloacetate + NADH + H(+). It functions in the pathway amino-acid biosynthesis; L-serine biosynthesis; L-serine from 3-phospho-D-glycerate: step 1/3. Catalyzes the reversible oxidation of 3-phospho-D-glycerate to 3-phosphonooxypyruvate, the first step of the phosphorylated L-serine biosynthesis pathway. Also catalyzes the reversible oxidation of 2-hydroxyglutarate to 2-oxoglutarate and the reversible oxidation of (S)-malate to oxaloacetate. This is D-3-phosphoglycerate dehydrogenase (PHGDH) from Pan troglodytes (Chimpanzee).